Consider the following 735-residue polypeptide: Photosystem I P700 chlorophyll a apoprotein A2 (735 aa).

8 helical membrane-spanning segments follow: residues 47–70, 136–159, 176–200, 274–292, 331–354, 370–396, 418–440, and 518–536; these read IFAS…FHVA, LYVG…LHLQ, LNHH…HVAI, MAHH…GHMY, LHFQ…QHMY, AALY…IFWI, AIIS…LYVH, and FLVH…LILV. [4Fe-4S] cluster is bound by residues Cys-560 and Cys-569. Transmembrane regions (helical) follow at residues 576–597 and 644–666; these read AFYL…YWHW and LSVW…MFLI. His-655, Met-663, and Tyr-671 together coordinate chlorophyll a. Residue Trp-672 coordinates phylloquinone. A helical transmembrane segment spans residues 708–728; that stretch reads LVGLAHFSVGYVFTYAAFVIA.

This sequence belongs to the PsaA/PsaB family. As to quaternary structure, the PsaA/B heterodimer binds the P700 chlorophyll special pair and subsequent electron acceptors. PSI consists of a core antenna complex that captures photons, and an electron transfer chain that converts photonic excitation into a charge separation. The eukaryotic PSI reaction center is composed of at least 11 subunits. The cofactor is P700 is a chlorophyll a/chlorophyll a' dimer, A0 is one or more chlorophyll a, A1 is one or both phylloquinones and FX is a shared 4Fe-4S iron-sulfur center..

The protein resides in the plastid. Its subcellular location is the chloroplast thylakoid membrane. The catalysed reaction is reduced [plastocyanin] + hnu + oxidized [2Fe-2S]-[ferredoxin] = oxidized [plastocyanin] + reduced [2Fe-2S]-[ferredoxin]. PsaA and PsaB bind P700, the primary electron donor of photosystem I (PSI), as well as the electron acceptors A0, A1 and FX. PSI is a plastocyanin/cytochrome c6-ferredoxin oxidoreductase, converting photonic excitation into a charge separation, which transfers an electron from the donor P700 chlorophyll pair to the spectroscopically characterized acceptors A0, A1, FX, FA and FB in turn. Oxidized P700 is reduced on the lumenal side of the thylakoid membrane by plastocyanin or cytochrome c6. This Tetradesmus obliquus (Green alga) protein is Photosystem I P700 chlorophyll a apoprotein A2.